Consider the following 152-residue polypeptide: Transcriptional regulator MraZ (152 aa).

SpoVT-AbrB domains are found at residues 5 to 52 (ASAI…PIHE) and 81 to 124 (AHEV…DEQS).

Belongs to the MraZ family. In terms of assembly, forms oligomers.

The protein localises to the cytoplasm. It is found in the nucleoid. In Shewanella baltica (strain OS155 / ATCC BAA-1091), this protein is Transcriptional regulator MraZ.